We begin with the raw amino-acid sequence, 416 residues long: Alpha-1-antiproteinase (416 aa).

The signal sequence occupies residues 1–24; that stretch reads MALSITRGLLLLAALCCLAPISLA. Residues Asn68, Asn105, Asn143, and Asn269 are each glycosylated (N-linked (GlcNAc...) asparagine). Residues 371 to 390 form an RCL region; the sequence is GSTFLEAIPMSLPPDVEFNR. Residue Ser381 is modified to Phosphoserine.

This sequence belongs to the serpin family. As to quaternary structure, interacts with CELA2A. Interacts with ERGIC3 and LMAN1/ERGIC53. Interacts with PRSS1/Trypsin. In terms of tissue distribution, plasma.

It is found in the secreted. In terms of biological role, inhibitor of serine proteases. Its primary target is elastase, but it also has a moderate affinity for plasmin and thrombin. Inhibits trypsin, chymotrypsin and plasminogen activator. In Bos taurus (Bovine), this protein is Alpha-1-antiproteinase (SERPINA1).